A 420-amino-acid chain; its full sequence is Napsin-A (420 aa).

An N-terminal signal peptide occupies residues 1-25 (MSPPPLLQPLLLLLPLLNVEPSGAT). The propeptide at 26–63 (LIRIPLHRVQPGRRILNLLRGWREPAELPKLGAPSPGD) is activation peptide. The Peptidase A1 domain occupies 78 to 399 (YFGEIGLGTP…MKSSARVGLA (322 aa)). Residue N90 is glycosylated (N-linked (GlcNAc...) asparagine). D96 is a catalytic residue. A disulfide bond links C109 and C116. N-linked (GlcNAc...) asparagine glycosylation is present at N133. Cysteines 274 and 278 form a disulfide. The active site involves D283. Residues C317 and C354 are joined by a disulfide bond. Residue N336 is glycosylated (N-linked (GlcNAc...) asparagine).

Belongs to the peptidase A1 family. Expressed predominantly in adult lung (type II pneumocytes) and kidney and in fetal lung. Low levels in adult spleen and very low levels in peripheral blood leukocytes.

Its subcellular location is the secreted. Its function is as follows. May be involved in processing of pneumocyte surfactant precursors. The sequence is that of Napsin-A (NAPSA) from Homo sapiens (Human).